Consider the following 460-residue polypeptide: Probable amino acid transporter skat-1 (460 aa).

A run of 10 helical transmembrane segments spans residues 64–84 (LGGLWVSFVMSFVIAGLNWYG), 132–152 (FVNVTILFYQLGMCSVAILFI), 172–192 (MILMATVSLFFILLTNMFTEM), 194–214 (IVSFFALVSSVFFVIGAAVIM), 236–256 (TITMIGMSMYAFEGQTMILPI), 270–290 (FGVLSTTMIICTAFMTALGFF), 316–336 (VNVFLMLQSLLGNSIAMYVVY), 362–382 (GFRVFWVLVTYLMAVLIPKLE), 383–403 (IMIPLVGVTSGALCALIFPPF), and 426–446 (IFINLVVMAIGVFAIIAGVYT).

It belongs to the amino acid/polyamine transporter 2 family. In terms of tissue distribution, expressed in the head, tail, body and ventral nerve cord neurons, muscles of the vulva, and intestine.

It is found in the membrane. It localises to the cytoplasmic granule. Its function is as follows. Plays a role in the accumulation of vital dyes and endogenous fluorescent compounds in lysosome related organelles. Has an effect on lysosome related organelle (LRO) function, in a pathway with serotonin. This is Probable amino acid transporter skat-1 from Caenorhabditis elegans.